Reading from the N-terminus, the 119-residue chain is Large ribosomal subunit protein bL20 (119 aa).

The protein belongs to the bacterial ribosomal protein bL20 family.

In terms of biological role, binds directly to 23S ribosomal RNA and is necessary for the in vitro assembly process of the 50S ribosomal subunit. It is not involved in the protein synthesizing functions of that subunit. The chain is Large ribosomal subunit protein bL20 from Caldicellulosiruptor bescii (strain ATCC BAA-1888 / DSM 6725 / KCTC 15123 / Z-1320) (Anaerocellum thermophilum).